The sequence spans 505 residues: Serine/threonine protein kinase OSK1 (505 aa).

The Protein kinase domain maps to 14 to 266 (YRIGKTLGIG…IREIREHQWF (253 aa)). Residues 20-28 (LGIGSFGKV) and K43 contribute to the ATP site. The active-site Proton acceptor is the D137. Residues 287-327 (KLDDETLNDVINMGFDKNQLIESLHKRLQNEATVAYYLLLD) form the UBA domain. Residues 347–361 (SSLAQVTPAETPNSA) show a composition bias toward polar residues. Residues 347–372 (SSLAQVTPAETPNSATDHRQHGHMES) form a disordered region. Positions 456 to 504 (SEKSTHTVKFEIQLYKTRDEKYLLDLQRVSGPQLLFLDLCSAFLTQLRV) constitute a KA1 domain.

The protein belongs to the protein kinase superfamily. Ser/Thr protein kinase family. Expressed in young roots, young shoots, flowers, and immature seeds. Mostly expressed in leaf sheaths and roots, and to a lower extent, in germinating seeds, leaf blades and panicles.

The protein localises to the nucleus. It carries out the reaction L-seryl-[protein] + ATP = O-phospho-L-seryl-[protein] + ADP + H(+). The catalysed reaction is L-threonyl-[protein] + ATP = O-phospho-L-threonyl-[protein] + ADP + H(+). Its function is as follows. Serine/threonine-protein kinase involved in sugar signaling during germination and seedling growth. Negative regulators of sugar response complex (SRC) in alpha-amylase gene promoters, thus relieving SRC sugar repression in a MYBS1-dependent manner. Required for MYBS1 and AAMY3 accumulation under glucose starvation. The chain is Serine/threonine protein kinase OSK1 from Oryza sativa subsp. japonica (Rice).